A 193-amino-acid chain; its full sequence is Thymidine kinase (193 aa).

ATP is bound by residues 9 to 16 and 87 to 90; these read STMNAGKS and DEAQ. The Proton acceptor role is filled by Glu88. Cys145, Cys147, Cys182, and His185 together coordinate Zn(2+).

It belongs to the thymidine kinase family. In terms of assembly, homotetramer.

The protein localises to the cytoplasm. It catalyses the reaction thymidine + ATP = dTMP + ADP + H(+). The polypeptide is Thymidine kinase (Haemophilus influenzae (strain 86-028NP)).